Here is a 70-residue protein sequence, read N- to C-terminus: Guanine nucleotide-binding protein G(I)/G(S)/G(O) subunit gamma-8 (70 aa).

Position 67 is a cysteine methyl ester (cysteine 67). Cysteine 67 carries S-geranylgeranyl cysteine lipidation. A propeptide spans 68–70 (TLL) (removed in mature form).

Belongs to the G protein gamma family. In terms of assembly, g proteins are composed of 3 units, alpha, beta and gamma. In terms of tissue distribution, detected in the olfactory epithelium, the vomeronasal epithelium and, to a lesser extent, the olfactory bulb.

It localises to the cell membrane. Guanine nucleotide-binding proteins (G proteins) are involved as a modulator or transducer in various transmembrane signaling systems. The beta and gamma chains are required for the GTPase activity, for replacement of GDP by GTP, and for G protein-effector interaction. This subunit may have a very specific role in the development and turnover of olfactory and vomeronasal neurons. In Rattus norvegicus (Rat), this protein is Guanine nucleotide-binding protein G(I)/G(S)/G(O) subunit gamma-8 (Gng8).